We begin with the raw amino-acid sequence, 547 residues long: Glucose-6-phosphate isomerase (547 aa).

The Proton donor role is filled by Glu-353. Active-site residues include His-384 and Lys-512.

This sequence belongs to the GPI family.

It localises to the cytoplasm. It carries out the reaction alpha-D-glucose 6-phosphate = beta-D-fructose 6-phosphate. It participates in carbohydrate biosynthesis; gluconeogenesis. Its pathway is carbohydrate degradation; glycolysis; D-glyceraldehyde 3-phosphate and glycerone phosphate from D-glucose: step 2/4. In terms of biological role, catalyzes the reversible isomerization of glucose-6-phosphate to fructose-6-phosphate. This chain is Glucose-6-phosphate isomerase, found in Glaesserella parasuis serovar 5 (strain SH0165) (Haemophilus parasuis).